Reading from the N-terminus, the 144-residue chain is Prefoldin subunit alpha (144 aa).

Belongs to the prefoldin alpha subunit family. As to quaternary structure, heterohexamer of two alpha and four beta subunits.

It localises to the cytoplasm. Its function is as follows. Molecular chaperone capable of stabilizing a range of proteins. Seems to fulfill an ATP-independent, HSP70-like function in archaeal de novo protein folding. This is Prefoldin subunit alpha from Metallosphaera sedula (strain ATCC 51363 / DSM 5348 / JCM 9185 / NBRC 15509 / TH2).